The chain runs to 448 residues: MAAPTLGHLVLTHLLVALLGMGSWAAVNGIWVELPVVVKHLPEGWSLPSYLSVVVALGNLGLLVVTLWRRLAPGKGERVPIQVVQVLSVVGTALLAPLWHHVAPVAGQLHSVAFLTLALVLALACCTSNVTFLPFLSHLPPPFLRSFFLGQGLSALLPCVLALVQGVGRLECSPAPTNGTSGPPLNFPERFPASTFYWALTALLVTSAAAFQGLLLLLPSLPSVTTGGAGPELPLGSPGAEEEEKEEEEALPLQEPPSQAAGTIPGPDPEAHQLFSAHGAFLLGLLAITSALTNGVLPAVQSFSCLPYGRLAYHLAVVLGSAANPLACFLAMGVLCRSLAGLVGLSLLGMLFGAYLMVLAILSPCPPLVGTTAGVVLVVLSWVLCLCVFSYVKVAASSLLHGGGRPALLAAGVAIQMGSLLGAGTMFPPTSIYHVFQSRKDCVDPCGP.

The next 5 helical transmembrane spans lie at Leu14 to Leu34, Leu47 to Leu67, Val79 to Trp99, Val105 to Cys125, and Phe147 to Val167. Asn178 carries N-linked (GlcNAc...) asparagine glycosylation. Residues Trp198–Leu218 form a helical membrane-spanning segment. Residues Gly228–Pro267 form a disordered region. A compositionally biased stretch (acidic residues) spans Ala240 to Ala250. A run of 5 helical transmembrane segments spans residues Ala280–Val300, Leu315–Leu335, Leu342–Leu362, Val369–Phe389, and Ala407–Phe427.

Belongs to the riboflavin transporter family.

Its subcellular location is the cell membrane. It carries out the reaction riboflavin(in) = riboflavin(out). With respect to regulation, riboflavin transport is Na(+)-independent but moderately pH-sensitive. Activity is strongly inhibited by riboflavin analogs, such as lumiflavin. Weakly inhibited by flavin adenine dinucleotide (FAD) and flavin mononucleotide (FMN). Plasma membrane transporter mediating the uptake by cells of the water soluble vitamin B2/riboflavin that plays a key role in biochemical oxidation-reduction reactions of the carbohydrate, lipid, and amino acid metabolism. May also act as a receptor for 4-hydroxybutyrate. In terms of biological role, (Microbial infection) In case of infection by retroviruses, acts as a cell receptor to retroviral envelopes similar to the porcine endogenous retrovirus (PERV-A). This is Solute carrier family 52, riboflavin transporter, member 2 (SLC52A2) from Papio hamadryas (Hamadryas baboon).